Reading from the N-terminus, the 489-residue chain is Pluviatolide synthase (489 aa).

A helical membrane pass occupies residues 6-26 (SVLAMSSTLILALAMALIFLF). Cys432 contributes to the heme binding site.

The protein belongs to the cytochrome P450 family. Heme is required as a cofactor. In terms of tissue distribution, expressed in leaves, rhizomes and stems.

It localises to the membrane. It catalyses the reaction (-)-matairesinol + reduced [NADPH--hemoprotein reductase] + O2 = (-)-pluviatolide + oxidized [NADPH--hemoprotein reductase] + 2 H2O + H(+). It functions in the pathway aromatic compound metabolism; phenylpropanoid biosynthesis. Cytochrome P450 involved in the biosynthesis of etoposide, a chemotherapeutic compound of the topoisomerase inhibitor family. Catalyzes the conversion of matairesinol to pluviatolide. This chain is Pluviatolide synthase, found in Sinopodophyllum hexandrum (Himalayan may apple).